The primary structure comprises 175 residues: Large ribosomal subunit protein mL67 (175 aa).

It belongs to the mitochondrion-specific ribosomal protein mL67 family. As to quaternary structure, component of the mitochondrial large ribosomal subunit (mt-LSU). Mature yeast 74S mitochondrial ribosomes consist of a small (37S) and a large (54S) subunit. The 37S small subunit contains a 15S ribosomal RNA (15S mt-rRNA) and at least 32 different proteins. The 54S large subunit contains a 21S rRNA (21S mt-rRNA) and at least 45 different proteins.

The protein localises to the mitochondrion. Its function is as follows. Component of the mitochondrial ribosome (mitoribosome), a dedicated translation machinery responsible for the synthesis of mitochondrial genome-encoded proteins, including at least some of the essential transmembrane subunits of the mitochondrial respiratory chain. The mitoribosomes are attached to the mitochondrial inner membrane and translation products are cotranslationally integrated into the membrane. mL67/mhr1 also has extraribosomal functions, being involved in regulation of mitochondrial DNA recombination, maintenance and repair, and generation of homoplasmic cells. mL67/mhr1 also acts as transcription factor involved in regulation of RNA polymerase II-dependent transcription. This Schizosaccharomyces pombe (strain 972 / ATCC 24843) (Fission yeast) protein is Large ribosomal subunit protein mL67 (mhr1).